Reading from the N-terminus, the 252-residue chain is NAD-dependent protein deacetylase (252 aa).

The 242-residue stretch at 2–243 folds into the Deacetylase sirtuin-type domain; the sequence is DSKRDEKILE…DRVVKELKKI (242 aa). Positions 28, 32, 39, 40, 109, 111, 112, and 127 each coordinate NAD(+). Phenylalanine 39 contacts nicotinamide. Nicotinamide contacts are provided by isoleucine 111 and aspartate 112. The active-site Proton acceptor is the histidine 127. Zn(2+) contacts are provided by cysteine 135, cysteine 138, cysteine 148, and cysteine 150. Threonine 188, serine 189, and asparagine 211 together coordinate NAD(+).

It belongs to the sirtuin family. Class U subfamily. Requires Zn(2+) as cofactor.

It is found in the cytoplasm. The enzyme catalyses N(6)-acetyl-L-lysyl-[protein] + NAD(+) + H2O = 2''-O-acetyl-ADP-D-ribose + nicotinamide + L-lysyl-[protein]. NAD-dependent protein deacetylase which modulates the activities of several enzymes which are inactive in their acetylated form. This Fusobacterium nucleatum subsp. nucleatum (strain ATCC 25586 / DSM 15643 / BCRC 10681 / CIP 101130 / JCM 8532 / KCTC 2640 / LMG 13131 / VPI 4355) protein is NAD-dependent protein deacetylase.